Reading from the N-terminus, the 453-residue chain is Bifunctional protein GlmU (453 aa).

The tract at residues 1–225 is pyrophosphorylase; sequence MNIVILAAGT…EWETLGVNSK (225 aa). Residues 6 to 9, K20, Q71, 76 to 77, 98 to 100, G135, E150, N165, and N223 each bind UDP-N-acetyl-alpha-D-glucosamine; these read LAAG, GT, and YGD. D100 is a binding site for Mg(2+). Residue N223 coordinates Mg(2+). Positions 226–246 are linker; the sequence is AQLAELERIHQRNIAEALLVD. The tract at residues 247 to 453 is N-acetyltransferase; that stretch reads GVTLADPARL…GYVRPVKKKS (207 aa). UDP-N-acetyl-alpha-D-glucosamine-binding residues include R329 and K347. H359 serves as the catalytic Proton acceptor. Residues Y362 and N373 each coordinate UDP-N-acetyl-alpha-D-glucosamine. Residues A376, 382–383, S401, and A419 contribute to the acetyl-CoA site; that span reads NY.

It in the N-terminal section; belongs to the N-acetylglucosamine-1-phosphate uridyltransferase family. The protein in the C-terminal section; belongs to the transferase hexapeptide repeat family. As to quaternary structure, homotrimer. It depends on Mg(2+) as a cofactor.

The protein localises to the cytoplasm. The catalysed reaction is alpha-D-glucosamine 1-phosphate + acetyl-CoA = N-acetyl-alpha-D-glucosamine 1-phosphate + CoA + H(+). It catalyses the reaction N-acetyl-alpha-D-glucosamine 1-phosphate + UTP + H(+) = UDP-N-acetyl-alpha-D-glucosamine + diphosphate. It participates in nucleotide-sugar biosynthesis; UDP-N-acetyl-alpha-D-glucosamine biosynthesis; N-acetyl-alpha-D-glucosamine 1-phosphate from alpha-D-glucosamine 6-phosphate (route II): step 2/2. The protein operates within nucleotide-sugar biosynthesis; UDP-N-acetyl-alpha-D-glucosamine biosynthesis; UDP-N-acetyl-alpha-D-glucosamine from N-acetyl-alpha-D-glucosamine 1-phosphate: step 1/1. Its pathway is bacterial outer membrane biogenesis; LPS lipid A biosynthesis. Catalyzes the last two sequential reactions in the de novo biosynthetic pathway for UDP-N-acetylglucosamine (UDP-GlcNAc). The C-terminal domain catalyzes the transfer of acetyl group from acetyl coenzyme A to glucosamine-1-phosphate (GlcN-1-P) to produce N-acetylglucosamine-1-phosphate (GlcNAc-1-P), which is converted into UDP-GlcNAc by the transfer of uridine 5-monophosphate (from uridine 5-triphosphate), a reaction catalyzed by the N-terminal domain. The chain is Bifunctional protein GlmU from Burkholderia lata (strain ATCC 17760 / DSM 23089 / LMG 22485 / NCIMB 9086 / R18194 / 383).